A 267-amino-acid polypeptide reads, in one-letter code: Putative ABC transporter permease protein MJ0413 (267 aa).

Transmembrane regions (helical) follow at residues 18–38 (VLKI…AIYI), 48–68 (EAVI…GSLI), 78–98 (VISG…LMGY), 115–135 (PIPP…GEMS), 136–156 (MIFI…ISGV), 188–208 (PSIL…VVAA), and 228–248 (LSRM…GLVL). The ABC transmembrane type-1 domain occupies 71-252 (TIISIKRVIS…LIGLVLDRGL (182 aa)).

This sequence belongs to the binding-protein-dependent transport system permease family. CysTW subfamily.

It is found in the cell membrane. In terms of biological role, probably part of a binding-protein-dependent transport system. Probably responsible for the translocation of the substrate across the membrane. This Methanocaldococcus jannaschii (strain ATCC 43067 / DSM 2661 / JAL-1 / JCM 10045 / NBRC 100440) (Methanococcus jannaschii) protein is Putative ABC transporter permease protein MJ0413.